The sequence spans 260 residues: 3-alpha-(or 20-beta)-hydroxysteroid dehydrogenase (260 aa).

The NAD(+) site is built by R17, M19, D38, D61, V62, N88, Y153, K157, V186, T188, and T191. The active-site Proton acceptor is the Y153.

Belongs to the short-chain dehydrogenases/reductases (SDR) family. Homotetramer.

The enzyme catalyses androstan-3alpha,17beta-diol + NAD(+) = 17beta-hydroxyandrostanone + NADH + H(+). It participates in lipid metabolism; steroid degradation. Functionally, probably involved in steroid metabolism. The sequence is that of 3-alpha-(or 20-beta)-hydroxysteroid dehydrogenase (fabG3) from Mycobacterium bovis (strain ATCC BAA-935 / AF2122/97).